The following is a 469-amino-acid chain: Pancreatic lipase-related protein 2 (469 aa).

The N-terminal stretch at 1-17 is a signal peptide; sequence MLPSWTIGLLLLATVRG. Residues cysteine 21 and cysteine 27 are joined by a disulfide bond. A glycan (N-linked (GlcNAc...) asparagine) is linked at asparagine 71. The required for galactolipase activity stretch occupies residues 93-105; that stretch reads IHGFIDDGDSGWP. A disulfide bridge links cysteine 109 with cysteine 120. The Nucleophile role is filled by serine 171. Residue aspartate 195 is the Charge relay system of the active site. Ca(2+) is bound by residues glutamate 206, arginine 209, aspartate 211, and aspartate 214. A disulfide bridge connects residues cysteine 256 and cysteine 280. Residues 257 to 279 form a required for galactolipase activity region; sequence QKNILSTIIDINGIWQGIQDFVA. Histidine 282 functions as the Charge relay system in the catalytic mechanism. 2 disulfides stabilise this stretch: cysteine 304/cysteine 315 and cysteine 318/cysteine 323. Residues asparagine 353, asparagine 399, and asparagine 455 are each glycosylated (N-linked (GlcNAc...) asparagine). In terms of domain architecture, PLAT spans 357 to 469; sequence WRYRVSVTLA…ENALQTLYPC (113 aa). Cysteine 453 and cysteine 469 are disulfide-bonded.

Belongs to the AB hydrolase superfamily. Lipase family.

It is found in the secreted. Its subcellular location is the zymogen granule membrane. It localises to the cell projection. The protein localises to the neuron projection. It carries out the reaction a triacylglycerol + H2O = a diacylglycerol + a fatty acid + H(+). The enzyme catalyses a 1,2-diacyl-3-O-(beta-D-galactosyl)-sn-glycerol + 2 H2O = 3-beta-D-galactosyl-sn-glycerol + 2 a fatty acid + 2 H(+). It catalyses the reaction 1,2,3-tri-(9Z-octadecenoyl)-glycerol + H2O = di-(9Z)-octadecenoylglycerol + (9Z)-octadecenoate + H(+). The catalysed reaction is di-(9Z)-octadecenoylglycerol + H2O = (9Z-octadecenoyl)-glycerol + (9Z)-octadecenoate + H(+). It carries out the reaction (9Z-octadecenoyl)-glycerol + H2O = glycerol + (9Z)-octadecenoate + H(+). The enzyme catalyses 1-(9Z-octadecenoyl)-glycerol + H2O = glycerol + (9Z)-octadecenoate + H(+). It catalyses the reaction 1,2,3-tripropanoylglycerol + H2O = dipropanoylglycerol + propanoate + H(+). The catalysed reaction is 1,2,3-tributanoylglycerol + H2O = dibutanoylglycerol + butanoate + H(+). It carries out the reaction 1,2,3-trioctanoylglycerol + H2O = dioctanoylglycerol + octanoate + H(+). The enzyme catalyses 1,2-didecanoylglycerol + H2O = decanoylglycerol + decanoate + H(+). It catalyses the reaction long chain 1,2-diacyl-3-O-beta-D-galactosyl-sn-glycerol + H2O = long chain acyl-3-O-beta-D-galactosyl-sn-glycerol + a fatty acid + H(+). The catalysed reaction is 1,2-dioctanoyl-3-O-beta-D-galactosyl-sn-glycerol + H2O = octanoyl-3-(beta-D-galactosyl)-sn-glycerol + octanoate + H(+). It carries out the reaction 1,2-didodecanoyl-3-beta-D-galactosyl-sn-glycerol + H2O = dodecanoyl-3-beta-D-galactosyl-sn-glycerol + dodecanoate + H(+). The enzyme catalyses 1-beta-D-galactosyl-2,3-didodecanoyl-sn-glycerol + H2O = 1-beta-D-galactosyl-dodecanoyl-sn-glycerol + dodecanoate + H(+). It catalyses the reaction a 1,2-diacyl-3-O-[alpha-D-galactosyl-(1-&gt;6)-beta-D-galactosyl]-sn-glycerol + H2O = acyl-3-O-[alpha-D-galactosyl-(1-&gt;6)-beta-D-galactosyl]-sn-glycerol + a fatty acid + H(+). The catalysed reaction is long chain 1,2-diacyl-3-O-[alpha-D-galactosyl-(1-&gt;6)-beta-D-galactosyl]-sn-glycerol + H2O = long chain acyl-3-O-[alpha-D-galactosyl-(1-&gt;6)-beta-D-galactosyl]-sn-glycerol + a fatty acid + H(+). It carries out the reaction 1,2-dioctanoyl-3-O-[alpha-D-galactosyl-(1-&gt;6)-beta-D-galactosyl]-sn-glycerol + H2O = octanoyl-3-O-[alpha-D-galactosyl-(1-&gt;6)-beta-D-galactosyl]-sn-glycerol + octanoate + H(+). The enzyme catalyses 1,2-didodecanoyl-3-O-[alpha-D-galactosyl-(1-&gt;6)-beta-D-galactosyl]-sn-glycerol + H2O = dodecanoyl-3-O-[alpha-D-galactosyl-(1-&gt;6)-beta-D-galactosyl]-sn-glycerol + dodecanoate + H(+). It catalyses the reaction a 1,2-diacyl-sn-glycero-3-phosphocholine + H2O = a monoacyl-sn-glycero-3-phosphocholine + a fatty acid + H(+). The protein operates within glycerolipid metabolism; triacylglycerol degradation. It functions in the pathway glycolipid metabolism. Functionally, lipase that primarily hydrolyzes triglycerides and galactosylglycerides. In neonates, may play a major role in pancreatic digestion of dietary fats such as milk fat globules enriched in long-chain triglycerides. Hydrolyzes short-, medium- and long-chain fatty acyls in triglycerides without apparent positional specificity. Can completely deacylate triacylglycerols. When the liver matures and bile salt synthesis increases, likely functions mainly as a galactolipase and monoacylglycerol lipase. Hydrolyzes monogalactosyldiglycerols (MGDG) and digalactosyldiacylglycerols (DGDG) present in a plant-based diet, releasing long-chain polyunsaturated fatty acids. Hydrolyzes medium- and long-chain fatty acyls in galactolipids. May act together with LIPF to hydrolyze partially digested triglycerides. Hydrolyzes long-chain monoglycerides with high efficiency. In cytotoxic T cells, contributes to perforin-dependent cell lysis, but is unlikely to mediate direct cytotoxicity. Also has low phospholipase activity. In neurons, required for the localization of the phospholipid 1-oleoyl-2-palmitoyl-PC (OPPC) to neurite tips through acyl chain remodeling of membrane phospholipids. The resulting OPPC-rich lipid membrane domain recruits the t-SNARE protein STX4 by selectively interacting with the STX4 transmembrane domain and this promotes surface expression of the dopamine transporter SLC6A3/DAT at neurite tips by facilitating fusion of SLC6A3-containing transport vesicles with the plasma membrane. This Bos taurus (Bovine) protein is Pancreatic lipase-related protein 2.